A 106-amino-acid polypeptide reads, in one-letter code: ATP-dependent Clp protease adapter protein ClpS (106 aa).

Belongs to the ClpS family. In terms of assembly, binds to the N-terminal domain of the chaperone ClpA.

Its function is as follows. Involved in the modulation of the specificity of the ClpAP-mediated ATP-dependent protein degradation. The chain is ATP-dependent Clp protease adapter protein ClpS from Sodalis glossinidius (strain morsitans).